Reading from the N-terminus, the 607-residue chain is CUB and zona pellucida-like domain-containing protein 1 (607 aa).

The N-terminal stretch at 1–19 is a signal peptide; sequence MEVTGRLFIWAILAVSCRA. The Lumenal segment spans residues 20–568; that stretch reads QLNSTAAEGR…AEISKQPLSH (549 aa). N22 is a glycosylation site (N-linked (GlcNAc...) asparagine). A disulfide bridge links C32 with C58. 2 consecutive CUB domains span residues 32 to 146 and 154 to 265; these read CTAS…YFFS and CGGY…YAST. N-linked (GlcNAc...) asparagine glycosylation is present at N67. 2 disulfide bridges follow: C85/C107 and C154/C180. Residue N195 is glycosylated (N-linked (GlcNAc...) asparagine). A disulfide bridge links C207 with C229. Residues 276 to 519 form the ZP domain; that stretch reads SCASDKMRVI…SRCNQGCVSR (244 aa). A glycan (N-linked (GlcNAc...) asparagine) is linked at N419. A disulfide bond links C442 and C498. The helical transmembrane segment at 569–589 threads the bilayer; sequence LHLFSFMVLALNVVIVVTATV. Over 590–607 the chain is Cytoplasmic; it reads RHFLNRWKDHGYQKLQVY.

Expressed predominantly in epithelium of uterus and oviduct.

The protein resides in the zymogen granule membrane. Functionally, localized to zymogen granules, where it functions in trypsinogen activation. May indirectly regulate cell motility, cell-cell and cell/extracellular matrix interactions. The sequence is that of CUB and zona pellucida-like domain-containing protein 1 from Rattus norvegicus (Rat).